Here is a 569-residue protein sequence, read N- to C-terminus: Proline--tRNA ligase (569 aa).

It belongs to the class-II aminoacyl-tRNA synthetase family. ProS type 1 subfamily. In terms of assembly, homodimer.

It is found in the cytoplasm. It catalyses the reaction tRNA(Pro) + L-proline + ATP = L-prolyl-tRNA(Pro) + AMP + diphosphate. In terms of biological role, catalyzes the attachment of proline to tRNA(Pro) in a two-step reaction: proline is first activated by ATP to form Pro-AMP and then transferred to the acceptor end of tRNA(Pro). As ProRS can inadvertently accommodate and process non-cognate amino acids such as alanine and cysteine, to avoid such errors it has two additional distinct editing activities against alanine. One activity is designated as 'pretransfer' editing and involves the tRNA(Pro)-independent hydrolysis of activated Ala-AMP. The other activity is designated 'posttransfer' editing and involves deacylation of mischarged Ala-tRNA(Pro). The misacylated Cys-tRNA(Pro) is not edited by ProRS. This Dehalococcoides mccartyi (strain CBDB1) protein is Proline--tRNA ligase.